The following is a 539-amino-acid chain: Chaperonin GroEL (539 aa).

ATP-binding positions include 29-32 (TLGP), 86-90 (DGTTT), glycine 413, and aspartate 492.

It belongs to the chaperonin (HSP60) family. In terms of assembly, forms a cylinder of 14 subunits composed of two heptameric rings stacked back-to-back. Interacts with the co-chaperonin GroES.

It is found in the cytoplasm. It carries out the reaction ATP + H2O + a folded polypeptide = ADP + phosphate + an unfolded polypeptide.. Its function is as follows. Together with its co-chaperonin GroES, plays an essential role in assisting protein folding. The GroEL-GroES system forms a nano-cage that allows encapsulation of the non-native substrate proteins and provides a physical environment optimized to promote and accelerate protein folding. This is Chaperonin GroEL from Fusobacterium nucleatum subsp. nucleatum (strain ATCC 25586 / DSM 15643 / BCRC 10681 / CIP 101130 / JCM 8532 / KCTC 2640 / LMG 13131 / VPI 4355).